Reading from the N-terminus, the 491-residue chain is Chromosomal replication initiator protein DnaA (491 aa).

The interval 1–86 (MTDELNSQFT…VEALSRRLGE (86 aa)) is domain I, interacts with DnaA modulators. The interval 86 to 150 (ENVELGVRIA…GADKAETPDT (65 aa)) is domain II. The tract at residues 151 to 367 (SLNARYTFES…GALIRVTAFA (217 aa)) is domain III, AAA+ region. 4 residues coordinate ATP: glycine 195, glycine 197, lysine 198, and threonine 199. Residues 368–491 (SLNKSPIELS…TARIRQRSRH (124 aa)) form a domain IV, binds dsDNA region.

The protein belongs to the DnaA family. Oligomerizes as a right-handed, spiral filament on DNA at oriC.

The protein localises to the cytoplasm. Its function is as follows. Plays an essential role in the initiation and regulation of chromosomal replication. ATP-DnaA binds to the origin of replication (oriC) to initiate formation of the DNA replication initiation complex once per cell cycle. Binds the DnaA box (a 9 base pair repeat at the origin) and separates the double-stranded (ds)DNA. Forms a right-handed helical filament on oriC DNA; dsDNA binds to the exterior of the filament while single-stranded (ss)DNA is stabiized in the filament's interior. The ATP-DnaA-oriC complex binds and stabilizes one strand of the AT-rich DNA unwinding element (DUE), permitting loading of DNA polymerase. After initiation quickly degrades to an ADP-DnaA complex that is not apt for DNA replication. Binds acidic phospholipids. The chain is Chromosomal replication initiator protein DnaA from Mycobacteroides abscessus (strain ATCC 19977 / DSM 44196 / CCUG 20993 / CIP 104536 / JCM 13569 / NCTC 13031 / TMC 1543 / L948) (Mycobacterium abscessus).